Consider the following 1615-residue polypeptide: Low-density lipoprotein receptor-related protein 5 (1615 aa).

Residues 1-31 form the signal peptide; that stretch reads MEAAPPGPPWPLLLLLLLLLALCGCPAPAAA. A beta-propeller 1 region spans residues 32–288; sequence SPLLLFANRR…YSPMDIQVLS (257 aa). Topologically, residues 32-1384 are extracellular; it reads SPLLLFANRR…PPSDDSPAHS (1353 aa). 5 LDL-receptor class B repeats span residues 75–119, 120–162, 163–206, 207–247, and 248–290; these read GAVY…DWVG, KKLY…DPAH, GYMY…DLEE, QKLY…TLSG, and DTLY…LSQE. A YWTD 1 repeat occupies 78-81; the sequence is YWTD. Asn93 carries an N-linked (GlcNAc...) asparagine glycan. A YWTD 2 repeat occupies 123-126; that stretch reads YWTD. An N-linked (GlcNAc...) asparagine glycan is attached at Asn138. One copy of the YWTD 3 repeat lies at 166-169; the sequence is YWTD. One copy of the YWTD 4 repeat lies at 251–254; the sequence is YWTD. Residues 295–337 enclose the EGF-like 1 domain; that stretch reads FHTRCEEDNGGCSHLCLLSPSEPFYTCACPTGVQLQDNGRTCK. Disulfide bonds link Cys299–Cys310, Cys306–Cys321, and Cys323–Cys336. Residues 341–602 form a beta-propeller 2 region; the sequence is EEVLLLARRT…AVNVAKVVGT (262 aa). 5 LDL-receptor class B repeats span residues 385-427, 428-470, 471-514, 515-557, and 558-600; these read GYVY…DWVA, RNLY…HPVM, GLMY…DLQE, GKLY…LGDF, and IYWT…AKVV. 2 YWTD repeats span residues 388–391 and 431–434; these read YWTD. Asn446 is a glycosylation site (N-linked (GlcNAc...) asparagine). The YWTD 7 repeat unit spans residues 474-477; the sequence is YWTD. The N-linked (GlcNAc...) asparagine glycan is linked to Asn499. A YWTD 8 repeat occupies 559-562; sequence YWTD. One can recognise an EGF-like 2 domain in the interval 601 to 641; sequence GTNPCADRNGGCSHLCFFTPHATRCGCPIGLELLSDMKTCI. Disulfide bonds link Cys605–Cys616, Cys612–Cys625, and Cys627–Cys640. Residues 644–903 form a beta-propeller 3 region; sequence EAFLVFTSRA…VFHSSRQDGL (260 aa). LDL-receptor class B repeat units lie at residues 687 to 729, 730 to 772, 773 to 815, 816 to 855, and 856 to 898; these read NHIY…DWMG, KNLY…DPTK, GYIY…DYAD, QRLY…TQYS, and DYIY…FHSS. A YWTD 9 repeat occupies 690–693; it reads YWTD. N-linked (GlcNAc...) asparagine glycosylation is present at Asn705. 2 YWTD repeats span residues 819-822 and 859-862; these read YWTD. The N-linked (GlcNAc...) asparagine glycan is linked to Asn878. The 41-residue stretch at 902-942 folds into the EGF-like 3 domain; the sequence is GLNDCMHNNGQCGQLCLAIPGGHRCGCASHYTLDPSSRNCS. 3 cysteine pairs are disulfide-bonded: Cys906-Cys917, Cys913-Cys926, and Cys928-Cys941. The segment at 945–1212 is beta-propeller 4; that stretch reads TTFLLFSQKS…AVEEVSLEEF (268 aa). 5 LDL-receptor class B repeats span residues 989–1035, 1036–1078, 1079–1123, 1124–1164, and 1165–1207; these read KFIY…DIYS, RTLF…NAER, GYLY…DNTL, GKLF…TILG, and KHLY…VEEV. In terms of domain architecture, EGF-like 4 spans 1213–1254; it reads SAHPCARDNGGCSHICIAKGDGTPRCSCPVHLVLLQNLLTCG. Cystine bridges form between Cys1217–Cys1228, Cys1224–Cys1238, Cys1240–Cys1253, Cys1259–Cys1273, Cys1266–Cys1286, Cys1280–Cys1295, Cys1298–Cys1310, Cys1305–Cys1323, Cys1317–Cys1332, Cys1336–Cys1348, Cys1343–Cys1361, and Cys1355–Cys1370. LDL-receptor class A domains follow at residues 1258–1296, 1297–1333, and 1335–1371; these read TCSP…EGCP, VCSA…ADCD, and ICLP…LMCE. The chain crosses the membrane as a helical span at residues 1385–1407; the sequence is SAIGPVIGIILSLFVMGGVYFVC. Over 1408–1615 the chain is Cytoplasmic; the sequence is QRVVCQRYAG…PPPSPCTDSS (208 aa). The interval 1475–1501 is disordered; that stretch reads RNHVTGASSSSSSSTKATLYPPILNPP. Positions 1500 to 1506 match the PPPSP motif A motif; the sequence is PPPSPAT. Residues 1538 to 1545 carry the PPPSP motif B motif; that stretch reads PPTTPCST. The interval 1568–1615 is disordered; sequence SDSDPYPPPPTPHSQYLSAEDSCPPSPATERSYFHLFPPPPSPCTDSS. Residues 1574-1581 carry the PPPSP motif C motif; that stretch reads PPPPTPHS. Positions 1591–1596 match the PPPSP motif D motif; the sequence is PPSPAT. Positions 1604–1615 are enriched in pro residues; that stretch reads FPPPPSPCTDSS. A PPPSP motif E motif is present at residues 1605–1612; it reads PPPPSPCT.

This sequence belongs to the LDLR family. In terms of assembly, homodimer; disulfide-linked. Forms phosphorylated oligomer aggregates on Wnt-signaling. Component of a Wnt-signaling complex that contains a WNT protein, a FZD protein and LRP5 or LRP6. Interacts with FZD8; the interaction is formed on WNT-binding and signaling. Interacts (via the phosphorylated PPPSP motif domains) with AXIN1; the interaction prevents inhibition of beta-catenin phosphorylation and signaling and is enhanced in the presence of GSK3B and WNT1 or WNT3A. Interacts (via beta-propeller regions 3 and 4) with DKK1; the interaction, enhanced by MESD and/or KREMEN, inhibits beta-catenin signaling by preventing GSK3-mediated phosphorylation of the PPPSP motifs and subsequent, AXIN1 binding. Interacts with MESD; the interaction prevents the formation of LRP5 aggregates, targets LRP5 to the plasma membrane and, when complexed with KREMEN2, increases DKK1 binding. Interacts with CSNK1E. Interacts with SOST; the interaction antagonizes canonical Wnt signaling. Interacts with APCDD1. Interacts with CAPRIN2. Post-translationally, phosphorylation of cytoplasmic PPPSP motifs regulates the signal transduction of the Wnt signaling pathway through acting as a docking site for AXIN1. As to expression, widely expressed, with the highest level of expression in the liver and in aorta.

It localises to the membrane. It is found in the endoplasmic reticulum. Acts as a coreceptor with members of the frizzled family of seven-transmembrane spanning receptors to transduce signal by Wnt proteins. Activates the canonical Wnt signaling pathway that controls cell fate determination and self-renewal during embryonic development and adult tissue regeneration. In particular, may play an important role in the development of the posterior patterning of the epiblast during gastrulation. During bone development, regulates osteoblast proliferation and differentiation thus determining bone mass. Mechanistically, the formation of the signaling complex between Wnt ligand, frizzled receptor and LRP5 coreceptor promotes the recruitment of AXIN1 to LRP5, stabilizing beta-catenin/CTNNB1 and activating TCF/LEF-mediated transcriptional programs. Acts as a coreceptor for non-Wnt proteins, such as norrin/NDP. Binding of norrin/NDP to frizzled 4/FZD4-LRP5 receptor complex triggers beta-catenin/CTNNB1-dependent signaling known to be required for retinal vascular development. Plays a role in controlling postnatal vascular regression in retina via macrophage-induced endothelial cell apoptosis. The polypeptide is Low-density lipoprotein receptor-related protein 5 (Homo sapiens (Human)).